The sequence spans 273 residues: Large ribosomal subunit protein uL2 (273 aa).

The segment at 196–273 is disordered; the sequence is GNSDHGLESS…SSKYIIERRK (78 aa). Composition is skewed to basic residues over residues 209–220 and 255–264; these read GRTRWMGRRPRN and LKTRAPKKQS.

This sequence belongs to the universal ribosomal protein uL2 family. Part of the 50S ribosomal subunit. Forms a bridge to the 30S subunit in the 70S ribosome.

In terms of biological role, one of the primary rRNA binding proteins. Required for association of the 30S and 50S subunits to form the 70S ribosome, for tRNA binding and peptide bond formation. It has been suggested to have peptidyltransferase activity; this is somewhat controversial. Makes several contacts with the 16S rRNA in the 70S ribosome. The chain is Large ribosomal subunit protein uL2 from Phocaeicola vulgatus (strain ATCC 8482 / DSM 1447 / JCM 5826 / CCUG 4940 / NBRC 14291 / NCTC 11154) (Bacteroides vulgatus).